The primary structure comprises 942 residues: UvrABC system protein A (942 aa).

32–39 is an ATP binding site; the sequence is GLSGSGKS. Residues 251–278 form a C4-type zinc finger; sequence CPVCGFTVPELEPRLFSFNAPFGSCPTC. 2 consecutive ABC transporter domains span residues 308–589 and 609–937; these read WNPI…KKSI and GNGR…HYLK. 641–648 contacts ATP; that stretch reads GVSGSGKS. The C4-type zinc finger occupies 740–766; it reads CEACSGDGIIKIEMHFLPDVYVPCEVC.

The protein belongs to the ABC transporter superfamily. UvrA family. As to quaternary structure, forms a heterotetramer with UvrB during the search for lesions.

Its subcellular location is the cytoplasm. The UvrABC repair system catalyzes the recognition and processing of DNA lesions. UvrA is an ATPase and a DNA-binding protein. A damage recognition complex composed of 2 UvrA and 2 UvrB subunits scans DNA for abnormalities. When the presence of a lesion has been verified by UvrB, the UvrA molecules dissociate. This chain is UvrABC system protein A, found in Streptococcus pyogenes serotype M1.